An 852-amino-acid polypeptide reads, in one-letter code: Tiger protein I3 (852 aa).

The signal sequence occupies residues 1–18 (MKILLFFILFYLFSFSIS). The Extracellular portion of the chain corresponds to 19 to 830 (YDEVIPLGYE…DVHQYSDARN (812 aa)). 31 N-linked (GlcNAc...) asparagine glycosylation sites follow: Asn31, Asn47, Asn67, Asn97, Asn129, Asn201, Asn215, Asn228, Asn260, Asn323, Asn352, Asn356, Asn404, Asn441, Asn476, Asn483, Asn501, Asn512, Asn574, Asn592, Asn635, Asn658, Asn661, Asn679, Asn680, Asn723, Asn757, Asn761, Asn773, Asn785, and Asn800. Residues 290–367 (IPSIVNSIPK…SSPIAVSIND (78 aa)) form the IPT/TIG domain. Residues 831–851 (IFQNLLLSILIIIIISLFISN) traverse the membrane as a helical segment. A topological domain (cytoplasmic) is located at residue Ile852.

The protein resides in the membrane. In Dictyostelium discoideum (Social amoeba), this protein is Tiger protein I3 (tgrI3).